The chain runs to 158 residues: Large ribosomal subunit protein uL15 (158 aa).

Residues 1-13 are compositionally biased toward basic and acidic residues; the sequence is MKLNEIKDNEGST. Residues 1–45 are disordered; it reads MKLNEIKDNEGSTHSRKRLGRGIGSGSGKTGGRGVKGQKSRSGVA. Gly residues predominate over residues 21–35; the sequence is RGIGSGSGKTGGRGV.

Belongs to the universal ribosomal protein uL15 family. In terms of assembly, part of the 50S ribosomal subunit.

Its function is as follows. Binds to the 23S rRNA. In Rhizobium etli (strain CIAT 652), this protein is Large ribosomal subunit protein uL15.